Reading from the N-terminus, the 226-residue chain is ATP synthase F(0) complex subunit a (226 aa).

Transmembrane regions (helical) follow at residues 5-25 (LFASFIAPTILGLPAAVLIIL), 68-88 (WSLMLMWLIIFIATTNLLGLL), 97-117 (QLSMNLAMAIPLWAGAVTTGF), 138-158 (IPMLVIIETISLFIQPMALAV), 160-180 (LTANITAGHLLMHLIGSATLA), and 189-209 (TLIIFTVLILLTMLEIAVALI).

It belongs to the ATPase A chain family. As to quaternary structure, component of the ATP synthase complex composed at least of ATP5F1A/subunit alpha, ATP5F1B/subunit beta, ATP5MC1/subunit c (homooctomer), MT-ATP6/subunit a, MT-ATP8/subunit 8, ATP5ME/subunit e, ATP5MF/subunit f, ATP5MG/subunit g, ATP5MK/subunit k, ATP5MJ/subunit j, ATP5F1C/subunit gamma, ATP5F1D/subunit delta, ATP5F1E/subunit epsilon, ATP5PF/subunit F6, ATP5PB/subunit b, ATP5PD/subunit d, ATP5PO/subunit OSCP. ATP synthase complex consists of a soluble F(1) head domain (subunits alpha(3) and beta(3)) - the catalytic core - and a membrane F(0) domain - the membrane proton channel (subunits c, a, 8, e, f, g, k and j). These two domains are linked by a central stalk (subunits gamma, delta, and epsilon) rotating inside the F1 region and a stationary peripheral stalk (subunits F6, b, d, and OSCP). Interacts with DNAJC30; interaction is direct.

It is found in the mitochondrion inner membrane. The catalysed reaction is H(+)(in) = H(+)(out). Functionally, subunit a, of the mitochondrial membrane ATP synthase complex (F(1)F(0) ATP synthase or Complex V) that produces ATP from ADP in the presence of a proton gradient across the membrane which is generated by electron transport complexes of the respiratory chain. ATP synthase complex consist of a soluble F(1) head domain - the catalytic core - and a membrane F(1) domain - the membrane proton channel. These two domains are linked by a central stalk rotating inside the F(1) region and a stationary peripheral stalk. During catalysis, ATP synthesis in the catalytic domain of F(1) is coupled via a rotary mechanism of the central stalk subunits to proton translocation. With the subunit c (ATP5MC1), forms the proton-conducting channel in the F(0) domain, that contains two crucial half-channels (inlet and outlet) that facilitate proton movement from the mitochondrial intermembrane space (IMS) into the matrix. Protons are taken up via the inlet half-channel and released through the outlet half-channel, following a Grotthuss mechanism. This is ATP synthase F(0) complex subunit a from Gorilla gorilla gorilla (Western lowland gorilla).